The chain runs to 301 residues: Methionine aminopeptidase (301 aa).

Histidine 65 lines the substrate pocket. A divalent metal cation is bound by residues aspartate 85, aspartate 96, and histidine 156. Histidine 164 lines the substrate pocket. Glutamate 189 and glutamate 284 together coordinate a divalent metal cation.

This sequence belongs to the peptidase M24A family. Methionine aminopeptidase archaeal type 2 subfamily. In terms of assembly, monomer. Co(2+) serves as cofactor. Zn(2+) is required as a cofactor. It depends on Mn(2+) as a cofactor. The cofactor is Fe(2+).

The catalysed reaction is Release of N-terminal amino acids, preferentially methionine, from peptides and arylamides.. Functionally, removes the N-terminal methionine from nascent proteins. The N-terminal methionine is often cleaved when the second residue in the primary sequence is small and uncharged (Met-Ala-, Cys, Gly, Pro, Ser, Thr, or Val). In Saccharolobus solfataricus (strain ATCC 35092 / DSM 1617 / JCM 11322 / P2) (Sulfolobus solfataricus), this protein is Methionine aminopeptidase.